The chain runs to 109 residues: Ferredoxin CarAc (109 aa).

Residues 3-108 enclose the 2Fe-2S ferredoxin-type domain; the sequence is AKVRVIFRAA…GLTLELPKAQ (106 aa). Residues cysteine 43, cysteine 49, cysteine 52, and cysteine 89 each contribute to the [2Fe-2S] cluster site.

Belongs to the adrenodoxin/putidaredoxin family. In terms of assembly, monomer. Carbazole 1,9a-dioxygenase complex consists of a terminal oxygenase component CarAa, a ferredoxin reductase component fdr and a ferredoxin component CarAc. [2Fe-2S] cluster serves as cofactor.

In terms of biological role, part of the multicomponent carbazole 1,9a-dioxygenase (CARDO), that converts carbazole (CAR) into 2-aminobiphenyl-2,3-diol. Acts as a mediator in the electron transfer from fdr to CarAa. The sequence is that of Ferredoxin CarAc (carAc) from Sphingomonas sp.